Reading from the N-terminus, the 308-residue chain is Very-long-chain enoyl-CoA reductase (308 aa).

The Cytoplasmic segment spans residues Met-1–Ser-86. N6-acetyllysine is present on Lys-22. Phosphoserine is present on Ser-58. Lys-60 is subject to N6-acetyllysine. The chain crosses the membrane as a helical span at residues Trp-87 to Tyr-106. The Lumenal segment spans residues Phe-107–His-124. Residues Thr-125–Phe-147 form a helical membrane-spanning segment. At Val-148–Leu-158 the chain is on the cytoplasmic side. The chain crosses the membrane as a helical span at residues Arg-159 to Asn-180. Over His-181 to Tyr-189 the chain is Lumenal. The helical transmembrane segment at Gly-190–Arg-216 threads the bilayer. Residues Asp-217 to Cys-245 are Cytoplasmic-facing. The chain crosses the membrane as a helical span at residues Pro-246 to Thr-262. Over Gln-263 to Cys-264 the chain is Lumenal. The helical transmembrane segment at Leu-265–Glu-292 threads the bilayer. The Cytoplasmic segment spans residues Phe-293 to Leu-308.

This sequence belongs to the steroid 5-alpha reductase family. Interacts with ELOVL1 and LASS2. Interacts with HACD1 and HACD2 (via the third lumenal loop), but not with HACD3 and HACD4. Interacts with ELOVL1, ELOVL2, ELOVL3, ELOVL5 and ELOVL7 in the presence of acyl-CoA; interaction with HACD1/2 and that with ELOVLs are mutually exclusive. Glycosylated. In terms of tissue distribution, expressed in most tissues tested. Highly expressed in skeletal muscle.

It localises to the endoplasmic reticulum membrane. The enzyme catalyses a very-long-chain 2,3-saturated fatty acyl-CoA + NADP(+) = a very-long-chain (2E)-enoyl-CoA + NADPH + H(+). The catalysed reaction is octadecanoyl-CoA + NADP(+) = (2E)-octadecenoyl-CoA + NADPH + H(+). It carries out the reaction (2E,7Z,10Z,13Z,16Z)-docosapentaenoyl-CoA + NADPH + H(+) = (7Z,10Z,13Z,16Z)-docosatetraenoyl-CoA + NADP(+). It catalyses the reaction (2E,7Z,10Z,13Z,16Z,19Z)-docosahexaenoyl-CoA + NADPH + H(+) = (7Z,10Z,13Z,16Z,19Z)-docosapentaenoyl-CoA + NADP(+). The enzyme catalyses (2E,8Z,11Z,14Z)-eicosatetraenoyl-CoA + NADPH + H(+) = (8Z,11Z,14Z)-eicosatrienoyl-CoA + NADP(+). The catalysed reaction is (2E)-hexadecenoyl-CoA + NADPH + H(+) = hexadecanoyl-CoA + NADP(+). It participates in lipid metabolism; fatty acid biosynthesis. It functions in the pathway lipid metabolism; sphingolipid metabolism. Functionally, involved in both the production of very long-chain fatty acids for sphingolipid synthesis and the degradation of the sphingosine moiety in sphingolipids through the sphingosine 1-phosphate metabolic pathway. Catalyzes the last of the four reactions of the long-chain fatty acids elongation cycle. This endoplasmic reticulum-bound enzymatic process, allows the addition of 2 carbons to the chain of long- and very long-chain fatty acids/VLCFAs per cycle. This enzyme reduces the trans-2,3-enoyl-CoA fatty acid intermediate to an acyl-CoA that can be further elongated by entering a new cycle of elongation. Thereby, it participates in the production of VLCFAs of different chain lengths that are involved in multiple biological processes as precursors of membrane lipids and lipid mediators. Catalyzes the saturation step of the sphingosine 1-phosphate metabolic pathway, the conversion of trans-2-hexadecenoyl-CoA to palmitoyl-CoA. This chain is Very-long-chain enoyl-CoA reductase (TECR), found in Homo sapiens (Human).